We begin with the raw amino-acid sequence, 359 residues long: Membrane-bound lytic murein transglycosylase C (359 aa).

Residues 1–16 form the signal peptide; it reads MKKYLALALIAPLLIS. Cys17 carries N-palmitoyl cysteine lipidation. Cys17 carries S-diacylglycerol cysteine lipidation.

Belongs to the transglycosylase Slt family.

The protein localises to the cell outer membrane. The catalysed reaction is Exolytic cleavage of the (1-&gt;4)-beta-glycosidic linkage between N-acetylmuramic acid (MurNAc) and N-acetylglucosamine (GlcNAc) residues in peptidoglycan, from either the reducing or the non-reducing ends of the peptidoglycan chains, with concomitant formation of a 1,6-anhydrobond in the MurNAc residue.. Functionally, murein-degrading enzyme. May play a role in recycling of muropeptides during cell elongation and/or cell division. The sequence is that of Membrane-bound lytic murein transglycosylase C from Escherichia coli O8 (strain IAI1).